A 194-amino-acid polypeptide reads, in one-letter code: Fe/S biogenesis protein NfuA (194 aa).

[4Fe-4S] cluster-binding residues include cysteine 151 and cysteine 154.

This sequence belongs to the NfuA family. Homodimer. The cofactor is [4Fe-4S] cluster.

Functionally, involved in iron-sulfur cluster biogenesis. Binds a 4Fe-4S cluster, can transfer this cluster to apoproteins, and thereby intervenes in the maturation of Fe/S proteins. Could also act as a scaffold/chaperone for damaged Fe/S proteins. The protein is Fe/S biogenesis protein NfuA of Aliivibrio fischeri (strain ATCC 700601 / ES114) (Vibrio fischeri).